A 277-amino-acid chain; its full sequence is Large ribosomal subunit protein uL2 (277 aa).

The disordered stretch occupies residues 222–277; the sequence is GSVMNPNDHPHGGGEGKAPVGRKAPSTPWGKPALGLKTRNKKAKSDKLIVRRRNEK. The span at 264 to 277 shows a compositional bias: basic and acidic residues; it reads AKSDKLIVRRRNEK.

It belongs to the universal ribosomal protein uL2 family. In terms of assembly, part of the 50S ribosomal subunit. Forms a bridge to the 30S subunit in the 70S ribosome.

In terms of biological role, one of the primary rRNA binding proteins. Required for association of the 30S and 50S subunits to form the 70S ribosome, for tRNA binding and peptide bond formation. It has been suggested to have peptidyltransferase activity; this is somewhat controversial. Makes several contacts with the 16S rRNA in the 70S ribosome. This Streptococcus thermophilus (strain CNRZ 1066) protein is Large ribosomal subunit protein uL2.